The following is a 901-amino-acid chain: Core protein VP3 (901 aa).

This sequence belongs to the orbivirus VP3 family.

The protein localises to the virion. Its function is as follows. The VP3 protein is one of the five proteins (with VP1, VP4, VP6 and VP7) which form the inner capsid of the virus. The polypeptide is Core protein VP3 (Segment-3) (Antilocapra americana (Pronghorn)).